The chain runs to 88 residues: Small ribosomal subunit protein bS18 (88 aa).

The protein belongs to the bacterial ribosomal protein bS18 family. As to quaternary structure, part of the 30S ribosomal subunit. Forms a tight heterodimer with protein bS6.

Binds as a heterodimer with protein bS6 to the central domain of the 16S rRNA, where it helps stabilize the platform of the 30S subunit. In Syntrophus aciditrophicus (strain SB), this protein is Small ribosomal subunit protein bS18.